The following is a 318-amino-acid chain: Nisin-resistance protein (318 aa).

The chain crosses the membrane as a helical span at residues 7-28 (ILLGLVAVCALFLGIIYLWGYK).

It localises to the cell membrane. This is Nisin-resistance protein (nsr) from Lactococcus lactis subsp. lactis (Streptococcus lactis).